We begin with the raw amino-acid sequence, 233 residues long: Cobalt-containing nitrile hydratase subunit beta (233 aa).

Belongs to the nitrile hydratase subunit beta family. As to quaternary structure, heterotetramer of two alpha and two beta chains.

It carries out the reaction an aliphatic primary amide = an aliphatic nitrile + H2O. NHase catalyzes the hydration of various nitrile compounds to the corresponding amides. The protein is Cobalt-containing nitrile hydratase subunit beta of Pseudonocardia thermophila.